The sequence spans 527 residues: DNA polymerase epsilon subunit 2 (527 aa).

It belongs to the DNA polymerase epsilon subunit B family. As to quaternary structure, component of the DNA polymerase epsilon complex consisting of four subunits: the catalytic subunit POLE and the accessory subunits POLE2, POLE3 and POLE4.

It is found in the nucleus. Its function is as follows. Accessory component of the DNA polymerase epsilon complex. Participates in DNA repair and in chromosomal DNA replication. The chain is DNA polymerase epsilon subunit 2 from Homo sapiens (Human).